Reading from the N-terminus, the 184-residue chain is Ribosome-recycling factor (184 aa).

A disordered region spans residues 137–158; that stretch reads DSIKAKQKDGIPEDEAKRGQDE.

The protein belongs to the RRF family.

It is found in the cytoplasm. Its function is as follows. Responsible for the release of ribosomes from messenger RNA at the termination of protein biosynthesis. May increase the efficiency of translation by recycling ribosomes from one round of translation to another. The protein is Ribosome-recycling factor of Desulforamulus reducens (strain ATCC BAA-1160 / DSM 100696 / MI-1) (Desulfotomaculum reducens).